A 542-amino-acid chain; its full sequence is Chaperonin GroEL (542 aa).

ATP contacts are provided by residues 29–32 (TLGP), 86–90 (DGTTT), Gly413, 477–479 (NAA), and Asp493.

Belongs to the chaperonin (HSP60) family. In terms of assembly, forms a cylinder of 14 subunits composed of two heptameric rings stacked back-to-back. Interacts with the co-chaperonin GroES.

Its subcellular location is the cytoplasm. The enzyme catalyses ATP + H2O + a folded polypeptide = ADP + phosphate + an unfolded polypeptide.. Its function is as follows. Together with its co-chaperonin GroES, plays an essential role in assisting protein folding. The GroEL-GroES system forms a nano-cage that allows encapsulation of the non-native substrate proteins and provides a physical environment optimized to promote and accelerate protein folding. The polypeptide is Chaperonin GroEL (Heliobacterium modesticaldum (strain ATCC 51547 / Ice1)).